Consider the following 202-residue polypeptide: ATP-dependent Clp protease proteolytic subunit 3 (202 aa).

Catalysis depends on Ser-93, which acts as the Nucleophile. His-118 is a catalytic residue.

This sequence belongs to the peptidase S14 family. As to quaternary structure, fourteen ClpP subunits assemble into 2 heptameric rings which stack back to back to give a disk-like structure with a central cavity, resembling the structure of eukaryotic proteasomes.

It localises to the cytoplasm. The enzyme catalyses Hydrolysis of proteins to small peptides in the presence of ATP and magnesium. alpha-casein is the usual test substrate. In the absence of ATP, only oligopeptides shorter than five residues are hydrolyzed (such as succinyl-Leu-Tyr-|-NHMec, and Leu-Tyr-Leu-|-Tyr-Trp, in which cleavage of the -Tyr-|-Leu- and -Tyr-|-Trp bonds also occurs).. Cleaves peptides in various proteins in a process that requires ATP hydrolysis. Has a chymotrypsin-like activity. Plays a major role in the degradation of misfolded proteins. In Rhodococcus jostii (strain RHA1), this protein is ATP-dependent Clp protease proteolytic subunit 3.